The sequence spans 208 residues: uncharacterized protein (208 aa).

The span at 1–18 shows a compositional bias: basic and acidic residues; it reads MSPTKDSHPSPHFPRDSG. 2 disordered regions span residues 1-122 and 135-208; these read MSPT…LPPP and RECH…TPDG.

This is an uncharacterized protein from Homo sapiens (Human).